Here is a 567-residue protein sequence, read N- to C-terminus: MEYDYIIIGAGSAGNVLAARLTEDADVTVLLLEAGGPDYRLDFRTQMPAALAFPLQGKRYNWAYETDPEPHMNNRRMECGRGKGLGGSSLINGMCYIRGNAMDFDHWASLSGLEDWSYLDCLPYFRKAETRDIGPNDFHGGEGPVSVTTPKIGNNPLFHAMVAAGVQAGYPRTDDLNGYQQEGFGPMDRTVTPKGRRASTARGYLDQARPRNNLTIITHALTDRILFEGKRATGVRYLKGDAGTGQTAYARREVLLCGGAIASPQILQRSGIGPAELLQRLDIPLVQALPGVGENLQDHLEMYLQYSCKQPVSLYPALLWFNQPKIGIEWLFNGTGVGASNQFEAGGFIRSRDAFTWPNIQYHFLPVAINYNGSNAVKEHGFQAHVGSMRSPSRGRIQVKSKDPRQHPSILFNYMSSEQDWHEFRDAIRITREIIAQPALDPYRGREISPGANVQNDDELDAFIREHAETAYHPSCSCKMGDDKMAVVDGQGRVHGVQGLRVVDASIMPQIITGNLNATTIMIAEKIADRIRGCQPLAKSNAAYFIAGDTPARTSPVRHSLPVTSYP.

4-33 contacts FAD; it reads DYIIIGAGSAGNVLAARLTEDADVTVLLLE. Catalysis depends on His473, which acts as the Proton acceptor.

It belongs to the GMC oxidoreductase family. It depends on FAD as a cofactor.

It catalyses the reaction choline + A = betaine aldehyde + AH2. The catalysed reaction is betaine aldehyde + NAD(+) + H2O = glycine betaine + NADH + 2 H(+). Its pathway is amine and polyamine biosynthesis; betaine biosynthesis via choline pathway; betaine aldehyde from choline (cytochrome c reductase route): step 1/1. Its function is as follows. Involved in the biosynthesis of the osmoprotectant glycine betaine. Catalyzes the oxidation of choline to betaine aldehyde and betaine aldehyde to glycine betaine at the same rate. In Yersinia pestis bv. Antiqua (strain Antiqua), this protein is Oxygen-dependent choline dehydrogenase.